Reading from the N-terminus, the 205-residue chain is N-(5'-phosphoribosyl)anthranilate isomerase (205 aa).

Belongs to the TrpF family.

The catalysed reaction is N-(5-phospho-beta-D-ribosyl)anthranilate = 1-(2-carboxyphenylamino)-1-deoxy-D-ribulose 5-phosphate. Its pathway is amino-acid biosynthesis; L-tryptophan biosynthesis; L-tryptophan from chorismate: step 3/5. The chain is N-(5'-phosphoribosyl)anthranilate isomerase from Thermotoga neapolitana (strain ATCC 49049 / DSM 4359 / NBRC 107923 / NS-E).